A 471-amino-acid chain; its full sequence is Adenosylhomocysteinase (471 aa).

Residues Thr60, Asp135, and Glu196 each contribute to the substrate site. 197 to 199 is a binding site for NAD(+); sequence TTT. Substrate is bound by residues Lys226 and Asp230. NAD(+) is bound by residues Asn231, 260 to 265, Glu283, Asn318, 339 to 341, and Asn387; these read GYGDVG and IGH.

This sequence belongs to the adenosylhomocysteinase family. It depends on NAD(+) as a cofactor.

Its subcellular location is the cytoplasm. The enzyme catalyses S-adenosyl-L-homocysteine + H2O = L-homocysteine + adenosine. It participates in amino-acid biosynthesis; L-homocysteine biosynthesis; L-homocysteine from S-adenosyl-L-homocysteine: step 1/1. May play a key role in the regulation of the intracellular concentration of adenosylhomocysteine. This is Adenosylhomocysteinase from Chlorobaculum tepidum (strain ATCC 49652 / DSM 12025 / NBRC 103806 / TLS) (Chlorobium tepidum).